Consider the following 580-residue polypeptide: E3 ubiquitin-protein ligase TRIM45 (580 aa).

The RING-type zinc-finger motif lies at 29–98 (CPLCLGLFKA…QIGILCPVCD (70 aa)). 2 consecutive B box-type zinc fingers follow at residues 130-176 (GQGL…MVDL) and 186-227 (GKPI…CDFT). Residues Cys-135, Cys-138, Cys-158, His-162, Cys-191, His-194, Cys-214, and His-219 each contribute to the Zn(2+) site. Residues 281-335 (SEGYIKAIEEHRDKLLKQLEDIRAQKENSLQLQKAQLEQLLADMRTGVEFTEHLL) are a coiled coil. Residues 394–497 (TKEVDPAKCV…VQGSPFTVMV (104 aa)) form a Filamin repeat.

Belongs to the TRIM/RBCC family. In terms of tissue distribution, expressed in skeletal muscle, brain, heart and pancreas.

The protein resides in the cytoplasm. It localises to the nucleus. The enzyme catalyses S-ubiquitinyl-[E2 ubiquitin-conjugating enzyme]-L-cysteine + [acceptor protein]-L-lysine = [E2 ubiquitin-conjugating enzyme]-L-cysteine + N(6)-ubiquitinyl-[acceptor protein]-L-lysine.. Its function is as follows. E3 ubiquitin-protein ligase that plays a role in the regulation of inflammatory response. Mechanistically, mediates the 'Lys-48'-linked polyubiquitination of TAB2, a regulatory protein of the kinase TAK1, leading to its degradation via the proteasomal pathway and inhibition of the TLR-mediated inflammatory immune response. May act as a transcriptional repressor in mitogen-activated protein kinase signaling pathway. The chain is E3 ubiquitin-protein ligase TRIM45 (TRIM45) from Homo sapiens (Human).